Here is a 173-residue protein sequence, read N- to C-terminus: Large ribosomal subunit protein uL15 (173 aa).

The span at 1-11 (MKLNEIRDNQG) shows a compositional bias: basic and acidic residues. Positions 1–50 (MKLNEIRDNQGARKSRVRVGRGIGSGLGKTGGRGQKGQKSRSGVSINGFE) are disordered. Gly residues predominate over residues 21–35 (RGIGSGLGKTGGRGQ).

The protein belongs to the universal ribosomal protein uL15 family. In terms of assembly, part of the 50S ribosomal subunit.

In terms of biological role, binds to the 23S rRNA. The sequence is that of Large ribosomal subunit protein uL15 from Rhizorhabdus wittichii (strain DSM 6014 / CCUG 31198 / JCM 15750 / NBRC 105917 / EY 4224 / RW1) (Sphingomonas wittichii).